Reading from the N-terminus, the 121-residue chain is Putative membrane protein insertion efficiency factor (121 aa).

The protein belongs to the UPF0161 family.

The protein resides in the cell membrane. Its function is as follows. Could be involved in insertion of integral membrane proteins into the membrane. This is Putative membrane protein insertion efficiency factor from Rhodococcus opacus (strain B4).